The sequence spans 275 residues: Ribosomal RNA small subunit methyltransferase A (275 aa).

S-adenosyl-L-methionine-binding residues include asparagine 28, leucine 30, glycine 55, glutamate 77, aspartate 103, and asparagine 123.

Belongs to the class I-like SAM-binding methyltransferase superfamily. rRNA adenine N(6)-methyltransferase family. RsmA subfamily.

The protein localises to the cytoplasm. It carries out the reaction adenosine(1518)/adenosine(1519) in 16S rRNA + 4 S-adenosyl-L-methionine = N(6)-dimethyladenosine(1518)/N(6)-dimethyladenosine(1519) in 16S rRNA + 4 S-adenosyl-L-homocysteine + 4 H(+). Functionally, specifically dimethylates two adjacent adenosines (A1518 and A1519) in the loop of a conserved hairpin near the 3'-end of 16S rRNA in the 30S particle. May play a critical role in biogenesis of 30S subunits. This Rhizobium johnstonii (strain DSM 114642 / LMG 32736 / 3841) (Rhizobium leguminosarum bv. viciae) protein is Ribosomal RNA small subunit methyltransferase A.